The sequence spans 117 residues: S-adenosylmethionine decarboxylase proenzyme (117 aa).

The active-site Schiff-base intermediate with substrate; via pyruvic acid is the S63. S63 bears the Pyruvic acid (Ser); by autocatalysis mark. The active-site Proton acceptor; for processing activity is H68. C83 functions as the Proton donor; for catalytic activity in the catalytic mechanism.

It belongs to the prokaryotic AdoMetDC family. Type 1 subfamily. Heterotetramer of two alpha and two beta chains arranged as a dimer of alpha/beta heterodimers. Pyruvate serves as cofactor. Is synthesized initially as an inactive proenzyme. Formation of the active enzyme involves a self-maturation process in which the active site pyruvoyl group is generated from an internal serine residue via an autocatalytic post-translational modification. Two non-identical subunits are generated from the proenzyme in this reaction, and the pyruvate is formed at the N-terminus of the alpha chain, which is derived from the carboxyl end of the proenzyme. The post-translation cleavage follows an unusual pathway, termed non-hydrolytic serinolysis, in which the side chain hydroxyl group of the serine supplies its oxygen atom to form the C-terminus of the beta chain, while the remainder of the serine residue undergoes an oxidative deamination to produce ammonia and the pyruvoyl group blocking the N-terminus of the alpha chain.

It catalyses the reaction S-adenosyl-L-methionine + H(+) = S-adenosyl 3-(methylsulfanyl)propylamine + CO2. The protein operates within amine and polyamine biosynthesis; S-adenosylmethioninamine biosynthesis; S-adenosylmethioninamine from S-adenosyl-L-methionine: step 1/1. Functionally, catalyzes the decarboxylation of S-adenosylmethionine to S-adenosylmethioninamine (dcAdoMet), the propylamine donor required for the synthesis of the polyamines spermine and spermidine from the diamine putrescine. This Methanococcus aeolicus (strain ATCC BAA-1280 / DSM 17508 / OCM 812 / Nankai-3) protein is S-adenosylmethionine decarboxylase proenzyme.